Here is a 223-residue protein sequence, read N- to C-terminus: uncharacterized protein (223 aa).

The signal sequence occupies residues 1 to 22 (MHLKKALCPALCTFLIHLCLHA). In terms of domain architecture, VWFA spans 30 to 204 (DIFLMIDKSR…RSIAAAHSKR (175 aa)). Positions 199–223 (AAHSKRPTPTPPAKESSPRYTPSLD) are disordered.

This is an uncharacterized protein from Treponema pallidum (strain Nichols).